Reading from the N-terminus, the 393-residue chain is Chorismate synthase (393 aa).

2 residues coordinate NADP(+): R40 and R46. FMN is bound by residues 129 to 131, 249 to 250, G301, 316 to 320, and R342; these read RSS, QA, and KPIPT.

This sequence belongs to the chorismate synthase family. As to quaternary structure, homotetramer. It depends on FMNH2 as a cofactor.

It catalyses the reaction 5-O-(1-carboxyvinyl)-3-phosphoshikimate = chorismate + phosphate. The protein operates within metabolic intermediate biosynthesis; chorismate biosynthesis; chorismate from D-erythrose 4-phosphate and phosphoenolpyruvate: step 7/7. In terms of biological role, catalyzes the anti-1,4-elimination of the C-3 phosphate and the C-6 proR hydrogen from 5-enolpyruvylshikimate-3-phosphate (EPSP) to yield chorismate, which is the branch point compound that serves as the starting substrate for the three terminal pathways of aromatic amino acid biosynthesis. This reaction introduces a second double bond into the aromatic ring system. This chain is Chorismate synthase, found in Geobacter metallireducens (strain ATCC 53774 / DSM 7210 / GS-15).